The following is a 396-amino-acid chain: Elongation factor Tu (396 aa).

The 197-residue stretch at 10 to 206 (KPHCNIGTIG…NVDEYIPQPE (197 aa)) folds into the tr-type G domain. The tract at residues 19–26 (GHVDHGKT) is G1. 19 to 26 (GHVDHGKT) contacts GTP. A Mg(2+)-binding site is contributed by Thr26. Residues 60-64 (GITIS) are G2. Residues 81-84 (DCPG) form a G3 region. GTP contacts are provided by residues 81–85 (DCPGH) and 136–139 (NKCD). Residues 136-139 (NKCD) form a G4 region. Residues 174 to 176 (SAL) form a G5 region.

It belongs to the TRAFAC class translation factor GTPase superfamily. Classic translation factor GTPase family. EF-Tu/EF-1A subfamily. Monomer.

The protein resides in the cytoplasm. The enzyme catalyses GTP + H2O = GDP + phosphate + H(+). GTP hydrolase that promotes the GTP-dependent binding of aminoacyl-tRNA to the A-site of ribosomes during protein biosynthesis. This Bradyrhizobium diazoefficiens (strain JCM 10833 / BCRC 13528 / IAM 13628 / NBRC 14792 / USDA 110) protein is Elongation factor Tu.